Reading from the N-terminus, the 832-residue chain is Vacuolar transmembrane transporter penV (832 aa).

The next 2 helical transmembrane spans lie at 39–59 (LYTQ…AFCI) and 117–137 (FFKF…AIIL). Positions 152-171 (WDNPPGNKTTSPIDGSEKEK) are disordered. Asn158 carries N-linked (GlcNAc...) asparagine glycosylation. A helical transmembrane segment spans residues 178–198 (YLWIYVLFAYVFSGLAIYMLL). Asn214 carries an N-linked (GlcNAc...) asparagine glycan. The tract at residues 291–322 (NDGNALPLTEQQPRDADDERSGLLSGHDNEHV) is disordered. Over residues 302-321 (QPRDADDERSGLLSGHDNEH) the composition is skewed to basic and acidic residues. The next 9 membrane-spanning stretches (helical) occupy residues 434 to 454 (FVIG…ASLL), 483 to 503 (GLPT…YEWL), 524 to 544 (FFFS…ASGF), 560 to 582 (TIAL…LLIL), 587 to 608 (LFPF…FLSA), 623 to 645 (FSYG…YSVF), 650 to 672 (LICL…QLLY), 687 to 707 (MICN…IGVL), and 713 to 733 (ITRS…SYWF). The tract at residues 754–777 (PGGGDISPSPSSTLSPPSGLDRDS) is disordered. Positions 759-771 (ISPSPSSTLSPPS) are enriched in low complexity.

The protein belongs to the CSC1 (TC 1.A.17) family.

It is found in the vacuole membrane. Its function is as follows. Vacuolar transmembrane transporter that participates in the first stage of the beta-lactam biosynthesis (the formation of the ACV tripeptide), probably taking part in the supply of amino acids from the vacuolar lumen to the vacuole-anchored ACV synthetase. The polypeptide is Vacuolar transmembrane transporter penV (Penicillium rubens (strain ATCC 28089 / DSM 1075 / NRRL 1951 / Wisconsin 54-1255) (Penicillium chrysogenum)).